The chain runs to 496 residues: Lysosomal Pro-X carboxypeptidase (496 aa).

The first 21 residues, Met-1–Ala-21, serve as a signal peptide directing secretion. A propeptide spanning residues Leu-22–Ala-45 is cleaved from the precursor. Residues Asn-47 and Asn-101 are each glycosylated (N-linked (GlcNAc...) asparagine). The active-site Charge relay system is Ser-179. The segment at His-194–Tyr-334 is SKS domain. 4 cysteine pairs are disulfide-bonded: Cys-215/Cys-372, Cys-233/Cys-310, Cys-264/Cys-343, and Cys-364/Cys-394. N-linked (GlcNAc...) asparagine glycosylation is found at Asn-317, Asn-336, and Asn-345. Residue Asn-415 is glycosylated (N-linked (GlcNAc...) asparagine). Active-site charge relay system residues include Asp-430 and His-455.

It belongs to the peptidase S28 family. Homodimer. In terms of tissue distribution, highest levels in placenta, lung and liver. Also present in heart, brain, pancreas and kidney.

The protein localises to the lysosome. It catalyses the reaction Cleavage of a -Pro-|-Xaa bond to release a C-terminal amino acid.. In terms of biological role, cleaves C-terminal amino acids linked to proline in peptides such as angiotensin II, III and des-Arg9-bradykinin. This cleavage occurs at acidic pH, but enzymatic activity is retained with some substrates at neutral pH. The protein is Lysosomal Pro-X carboxypeptidase (PRCP) of Homo sapiens (Human).